We begin with the raw amino-acid sequence, 189 residues long: MQKLSFRQGLAQILNLLLVLSSAYMGYKTLSFVTDCESPVVVVLSESMEPSFQRGDLLFLDNRNPSFDEAKVPSVFEKIIYGSPVGIGDIVVYSLPDRPIPIVHRVVKLYESENQTHLITKGDNNKIDDVAMFPKSINYLDRENHILGVVRGYFPYLGMITIWLTDYPILKYIMLGGLGLLTLIQKEEQ.

Residues 1 to 8 (MQKLSFRQ) lie on the Cytoplasmic side of the membrane. A helical; Signal-anchor for type II membrane protein membrane pass occupies residues 9–25 (GLAQILNLLLVLSSAYM). Topologically, residues 26–189 (GYKTLSFVTD…LLTLIQKEEQ (164 aa)) are lumenal. Residues serine 47 and histidine 104 each act as charge relay system in the active site. Asparagine 114 carries an N-linked (GlcNAc...) asparagine glycan. The active-site Charge relay system is aspartate 129. Residues 173–184 (IMLGGLGLLTLI) are C-terminal short (CTS) helix.

The protein belongs to the peptidase S26B family. Component of the signal peptidase complex (SPC) composed of a catalytic subunit sec11 and three accessory subunits spc1, spc2 and spc3. The complex induces a local thinning of the ER membrane which is used to measure the length of the signal peptide (SP) h-region of protein substrates. This ensures the selectivity of the complex towards h-regions shorter than 18-20 amino acids. SPC associates with the translocon complex.

It localises to the endoplasmic reticulum membrane. The catalysed reaction is Cleavage of hydrophobic, N-terminal signal or leader sequences from secreted and periplasmic proteins.. Its function is as follows. Catalytic component of the signal peptidase complex (SPC) which catalyzes the cleavage of N-terminal signal sequences from nascent proteins as they are translocated into the lumen of the endoplasmic reticulum. Specifically cleaves N-terminal signal peptides that contain a hydrophobic alpha-helix (h-region) shorter than 18-20 amino acids. The polypeptide is Signal peptidase complex catalytic subunit sec11 (sec11) (Schizosaccharomyces pombe (strain 972 / ATCC 24843) (Fission yeast)).